We begin with the raw amino-acid sequence, 317 residues long: Acetyl-coenzyme A carboxylase carboxyl transferase subunit alpha (317 aa).

The region spanning 33–294 is the CoA carboxyltransferase C-terminal domain; the sequence is NINKEINCLR…KNRILKDLKE (262 aa).

The protein belongs to the AccA family. In terms of assembly, acetyl-CoA carboxylase is a heterohexamer composed of biotin carboxyl carrier protein (AccB), biotin carboxylase (AccC) and two subunits each of ACCase subunit alpha (AccA) and ACCase subunit beta (AccD).

Its subcellular location is the cytoplasm. The enzyme catalyses N(6)-carboxybiotinyl-L-lysyl-[protein] + acetyl-CoA = N(6)-biotinyl-L-lysyl-[protein] + malonyl-CoA. The protein operates within lipid metabolism; malonyl-CoA biosynthesis; malonyl-CoA from acetyl-CoA: step 1/1. Its function is as follows. Component of the acetyl coenzyme A carboxylase (ACC) complex. First, biotin carboxylase catalyzes the carboxylation of biotin on its carrier protein (BCCP) and then the CO(2) group is transferred by the carboxyltransferase to acetyl-CoA to form malonyl-CoA. The protein is Acetyl-coenzyme A carboxylase carboxyl transferase subunit alpha of Wigglesworthia glossinidia brevipalpis.